A 1160-amino-acid chain; its full sequence is Protein GIGANTEA (1160 aa).

Over residues 158–169 the composition is skewed to polar residues; that stretch reads CSSTSDQASSCE. Disordered regions lie at residues 158 to 188, 600 to 629, and 800 to 830; these read CSSTSDQASSCESMEKRANGSPRNEPDRKPL, GGSKRPTGSDNHSSEEVTNDSRLTNGRNRC, and PVKKDEPPIEEKNINSSDGGALEKKDASRSH. The segment covering 170–187 has biased composition (basic and acidic residues); that stretch reads SMEKRANGSPRNEPDRKP. The segment covering 801–812 has biased composition (basic and acidic residues); the sequence is VKKDEPPIEEKN.

Belongs to the GIGANTEA family.

Its subcellular location is the nucleus. Involved in regulation of circadian rhythm, and in the control of the photoperiodic flowering. Acts as a suppressor of flowering under short-day (SD) and long-day (LD) conditions. Activates Hd1/CONSTANS gene. The chain is Protein GIGANTEA (GI) from Oryza sativa subsp. japonica (Rice).